We begin with the raw amino-acid sequence, 213 residues long: High frequency lysogenization protein HflD homolog (213 aa).

A coiled-coil region spans residues 79–126; that stretch reads QGLNAELTRYTLSLMVLERKLSSAKGALDTLGNRINGLQRQLEHFDLQ.

The protein belongs to the HflD family.

The protein localises to the cytoplasm. It localises to the cell inner membrane. The chain is High frequency lysogenization protein HflD homolog from Shigella boydii serotype 18 (strain CDC 3083-94 / BS512).